A 61-amino-acid polypeptide reads, in one-letter code: Potassium channel toxin alpha-KTx 6.7 (61 aa).

The N-terminal stretch at 1-23 is a signal peptide; that stretch reads MNAKFILLLLVVTTTMLLPDTQG. Cystine bridges form between cysteine 29–cysteine 50, cysteine 35–cysteine 55, cysteine 39–cysteine 57, and cysteine 45–cysteine 60. Cysteine 60 bears the Cysteine amide mark.

The protein belongs to the short scorpion toxin superfamily. Potassium channel inhibitor family. Alpha-KTx 06 subfamily. In terms of tissue distribution, expressed by the venom gland.

It localises to the secreted. Blocker of voltage-gated potassium channels. The polypeptide is Potassium channel toxin alpha-KTx 6.7 (Opistophthalmus carinatus (African yellow leg scorpion)).